A 111-amino-acid polypeptide reads, in one-letter code: Cell cycle protein GpsB (111 aa).

Residues 34 to 72 adopt a coiled-coil conformation; that stretch reads LDMIIKDYEVFHKELEQLQQQNARLKRELEEQKLAAAQA.

It belongs to the GpsB family. In terms of assembly, forms polymers through the coiled coil domains. Interacts with PBP1, MreC and EzrA.

Its subcellular location is the cytoplasm. In terms of biological role, divisome component that associates with the complex late in its assembly, after the Z-ring is formed, and is dependent on DivIC and PBP2B for its recruitment to the divisome. Together with EzrA, is a key component of the system that regulates PBP1 localization during cell cycle progression. Its main role could be the removal of PBP1 from the cell pole after pole maturation is completed. Also contributes to the recruitment of PBP1 to the division complex. Not essential for septum formation. The sequence is that of Cell cycle protein GpsB from Bacillus cytotoxicus (strain DSM 22905 / CIP 110041 / 391-98 / NVH 391-98).